Consider the following 339-residue polypeptide: uncharacterized protein (339 aa).

The segment covering 1–12 (MDIDLNNQTDNN) has biased composition (polar residues). Residues 1–30 (MDIDLNNQTDNNELIVEDTENPKNPNSTNI) are disordered.

This is an uncharacterized protein from Acanthamoeba polyphaga (Amoeba).